We begin with the raw amino-acid sequence, 43 residues long: Cytochrome b559 subunit beta (43 aa).

The helical transmembrane segment at 18–34 (WLAIHGLAIPTVFFLGG) threads the bilayer. His-22 lines the heme pocket.

Belongs to the PsbE/PsbF family. In terms of assembly, heterodimer of an alpha subunit and a beta subunit. PSII is composed of 1 copy each of membrane proteins PsbA, PsbB, PsbC, PsbD, PsbE, PsbF, PsbH, PsbI, PsbJ, PsbK, PsbL, PsbM, PsbT, PsbX, PsbY, PsbZ, Psb30/Ycf12, at least 3 peripheral proteins of the oxygen-evolving complex and a large number of cofactors. It forms dimeric complexes. Requires heme b as cofactor.

It is found in the plastid. The protein resides in the chloroplast thylakoid membrane. In terms of biological role, this b-type cytochrome is tightly associated with the reaction center of photosystem II (PSII). PSII is a light-driven water:plastoquinone oxidoreductase that uses light energy to abstract electrons from H(2)O, generating O(2) and a proton gradient subsequently used for ATP formation. It consists of a core antenna complex that captures photons, and an electron transfer chain that converts photonic excitation into a charge separation. This is Cytochrome b559 subunit beta from Trieres chinensis (Marine centric diatom).